The following is a 190-amino-acid chain: Peptidyl-tRNA hydrolase (190 aa).

Tyrosine 14 provides a ligand contact to tRNA. Histidine 19 serves as the catalytic Proton acceptor. Positions 64, 66, and 112 each coordinate tRNA.

It belongs to the PTH family. As to quaternary structure, monomer.

It localises to the cytoplasm. It carries out the reaction an N-acyl-L-alpha-aminoacyl-tRNA + H2O = an N-acyl-L-amino acid + a tRNA + H(+). Hydrolyzes ribosome-free peptidyl-tRNAs (with 1 or more amino acids incorporated), which drop off the ribosome during protein synthesis, or as a result of ribosome stalling. Its function is as follows. Catalyzes the release of premature peptidyl moieties from peptidyl-tRNA molecules trapped in stalled 50S ribosomal subunits, and thus maintains levels of free tRNAs and 50S ribosomes. This chain is Peptidyl-tRNA hydrolase, found in Chlorobium limicola (strain DSM 245 / NBRC 103803 / 6330).